Consider the following 399-residue polypeptide: Phosphoglycerate kinase (399 aa).

Substrate contacts are provided by residues 22–24 (DFN), Arg37, 60–63 (HFGR), Arg118, and Arg151. ATP is bound by residues Lys201, Glu322, and 352-355 (GGDS).

This sequence belongs to the phosphoglycerate kinase family. As to quaternary structure, monomer.

Its subcellular location is the cytoplasm. It carries out the reaction (2R)-3-phosphoglycerate + ATP = (2R)-3-phospho-glyceroyl phosphate + ADP. Its pathway is carbohydrate degradation; glycolysis; pyruvate from D-glyceraldehyde 3-phosphate: step 2/5. The protein is Phosphoglycerate kinase of Wolbachia sp. subsp. Brugia malayi (strain TRS).